The primary structure comprises 85 residues: U4-theraphotoxin-Hhn1q (85 aa).

The signal sequence occupies residues 1–22 (MKVTLIAILTCAAVLVLHTTAA). Residues 23 to 48 (EELEAESQLMEVGMPDTELAAVDEER) constitute a propeptide that is removed on maturation. 3 disulfide bridges follow: cysteine 52/cysteine 66, cysteine 56/cysteine 77, and cysteine 71/cysteine 82.

This sequence belongs to the neurotoxin 12 (Hwtx-2) family. 02 (Hwtx-2) subfamily. In terms of tissue distribution, expressed by the venom gland.

It is found in the secreted. Its function is as follows. Postsynaptic neurotoxin. The protein is U4-theraphotoxin-Hhn1q of Cyriopagopus hainanus (Chinese bird spider).